A 439-amino-acid polypeptide reads, in one-letter code: ATP-dependent RNA helicase RhlB (439 aa).

Positions 9–37 match the Q motif motif; sequence QKFADLPLCDEVKQALNENGFEHCTPIQA. In terms of domain architecture, Helicase ATP-binding spans 40–219; sequence LPVLLEKKDI…YDHMNDPVKV (180 aa). ATP is bound at residue 53–60; it reads AQTGTGKT. The DEAD box motif lies at 165–168; that stretch reads DEAD. Residues 243 to 390 form the Helicase C-terminal domain; the sequence is KLKLLHSLIE…VTSYDRDALI (148 aa). The tract at residues 394–439 is disordered; sequence PPVKIHRKPHAGGRNLRDRNGSPRPSGSHRSGSGRPPRHDRTRRHS. The span at 415–428 shows a compositional bias: low complexity; the sequence is SPRPSGSHRSGSGR. The segment covering 429-439 has biased composition (basic residues); that stretch reads PPRHDRTRRHS.

It belongs to the DEAD box helicase family. RhlB subfamily. As to quaternary structure, component of the RNA degradosome, which is a multiprotein complex involved in RNA processing and mRNA degradation.

The protein resides in the cytoplasm. The catalysed reaction is ATP + H2O = ADP + phosphate + H(+). In terms of biological role, DEAD-box RNA helicase involved in RNA degradation. Has RNA-dependent ATPase activity and unwinds double-stranded RNA. This chain is ATP-dependent RNA helicase RhlB, found in Shewanella amazonensis (strain ATCC BAA-1098 / SB2B).